The sequence spans 123 residues: MEGLVVAAGGDVSLHNFSARLWEQLVHFHVMRLTDSLFLWVGATPHLRNLAVAMCSRYDSIPVSTSLLGDTSDTTSTGLAQRLARKTNKQVFVSYNLQNTDSNFALLVENRIKEEMEAFPEKF.

The protein belongs to the PSMG4 family. In terms of assembly, interacts with PSMG3. Associates with alpha subunits of the 20S proteasome.

Functionally, chaperone protein which promotes assembly of the 20S proteasome. This chain is Proteasome assembly chaperone 4, found in Homo sapiens (Human).